Here is a 279-residue protein sequence, read N- to C-terminus: Probable endonuclease 4 (279 aa).

Zn(2+) is bound by residues His-69, His-109, Glu-145, Asp-179, His-182, His-216, Asp-229, His-231, and Glu-261.

It belongs to the AP endonuclease 2 family. The cofactor is Zn(2+).

The catalysed reaction is Endonucleolytic cleavage to 5'-phosphooligonucleotide end-products.. In terms of biological role, endonuclease IV plays a role in DNA repair. It cleaves phosphodiester bonds at apurinic or apyrimidinic (AP) sites, generating a 3'-hydroxyl group and a 5'-terminal sugar phosphate. This is Probable endonuclease 4 from Serratia proteamaculans (strain 568).